A 392-amino-acid polypeptide reads, in one-letter code: Spermatogenesis associated 6-like protein (392 aa).

Residues serine 260 and serine 263 each carry the phosphoserine modification. Residues 286-301 are compositionally biased toward low complexity; that stretch reads SCLDSSQFGKSSSSKQ. The segment at 286 to 305 is disordered; the sequence is SCLDSSQFGKSSSSKQGDAD.

The protein belongs to the SPATA6 family.

In Homo sapiens (Human), this protein is Spermatogenesis associated 6-like protein (SPATA6L).